An 807-amino-acid polypeptide reads, in one-letter code: Ribosome-releasing factor 2, mitochondrial (807 aa).

The N-terminal 18 residues, 1–18 (MFCRKYAFQTWKQFSRFY), are a transit peptide targeting the mitochondrion. Residues 27–315 (SKTRNIGIIA…GITKYLPSPL (289 aa)) enclose the tr-type G domain. Residues 36–43 (AHIDAGKT), 100–104 (DTPGH), and 154–157 (NKMD) each bind GTP.

Belongs to the TRAFAC class translation factor GTPase superfamily. Classic translation factor GTPase family. EF-G/EF-2 subfamily.

The protein localises to the mitochondrion. Functionally, mitochondrial GTPase that mediates the disassembly of ribosomes from messenger RNA at the termination of mitochondrial protein biosynthesis. Not involved in the GTP-dependent ribosomal translocation step during translation elongation. The sequence is that of Ribosome-releasing factor 2, mitochondrial from Candida dubliniensis (strain CD36 / ATCC MYA-646 / CBS 7987 / NCPF 3949 / NRRL Y-17841) (Yeast).